The primary structure comprises 692 residues: Elongation factor G (692 aa).

The region spanning 9–284 (HKVRNIGIAA…AVVDYLPAPD (276 aa)) is the tr-type G domain. Residues 18 to 25 (AHIDAGKT), 82 to 86 (DTPGH), and 136 to 139 (NKMD) each bind GTP.

This sequence belongs to the TRAFAC class translation factor GTPase superfamily. Classic translation factor GTPase family. EF-G/EF-2 subfamily.

It is found in the cytoplasm. In terms of biological role, catalyzes the GTP-dependent ribosomal translocation step during translation elongation. During this step, the ribosome changes from the pre-translocational (PRE) to the post-translocational (POST) state as the newly formed A-site-bound peptidyl-tRNA and P-site-bound deacylated tRNA move to the P and E sites, respectively. Catalyzes the coordinated movement of the two tRNA molecules, the mRNA and conformational changes in the ribosome. The protein is Elongation factor G of Campylobacter concisus (strain 13826).